Here is a 393-residue protein sequence, read N- to C-terminus: Riboflavin biosynthesis protein RibBA (393 aa).

The interval 1–200 (MQFDTIELAI…IKSLVAFRKA (200 aa)) is DHBP synthase. Residues 27–28 (RE), aspartate 32, 139–143 (RNGHT), and glutamate 163 contribute to the D-ribulose 5-phosphate site. Glutamate 28 provides a ligand contact to Mg(2+). Residue histidine 142 coordinates Mg(2+). A GTP cyclohydrolase II region spans residues 201–393 (VELNVNLKAK…TKKNKMGHLI (193 aa)). Residue 249-253 (RMHSA) coordinates GTP. Cysteine 254, cysteine 265, and cysteine 267 together coordinate Zn(2+). GTP-binding positions include glutamine 270, 291-293 (EGR), and threonine 313. Aspartate 325 acts as the Proton acceptor; for GTP cyclohydrolase activity in catalysis. The active-site Nucleophile; for GTP cyclohydrolase activity is the arginine 327. The GTP site is built by serine 348 and lysine 353.

In the N-terminal section; belongs to the DHBP synthase family. This sequence in the C-terminal section; belongs to the GTP cyclohydrolase II family. Mg(2+) serves as cofactor. Requires Mn(2+) as cofactor. It depends on Zn(2+) as a cofactor.

The catalysed reaction is D-ribulose 5-phosphate = (2S)-2-hydroxy-3-oxobutyl phosphate + formate + H(+). It catalyses the reaction GTP + 4 H2O = 2,5-diamino-6-hydroxy-4-(5-phosphoribosylamino)-pyrimidine + formate + 2 phosphate + 3 H(+). The protein operates within cofactor biosynthesis; riboflavin biosynthesis; 2-hydroxy-3-oxobutyl phosphate from D-ribulose 5-phosphate: step 1/1. It functions in the pathway cofactor biosynthesis; riboflavin biosynthesis; 5-amino-6-(D-ribitylamino)uracil from GTP: step 1/4. In terms of biological role, catalyzes the conversion of D-ribulose 5-phosphate to formate and 3,4-dihydroxy-2-butanone 4-phosphate. Functionally, catalyzes the conversion of GTP to 2,5-diamino-6-ribosylamino-4(3H)-pyrimidinone 5'-phosphate (DARP), formate and pyrophosphate. In Staphylococcus epidermidis (strain ATCC 12228 / FDA PCI 1200), this protein is Riboflavin biosynthesis protein RibBA.